Reading from the N-terminus, the 164-residue chain is Ribosome maturation factor RimP (164 aa).

This sequence belongs to the RimP family.

The protein resides in the cytoplasm. In terms of biological role, required for maturation of 30S ribosomal subunits. In Mesoplasma florum (strain ATCC 33453 / NBRC 100688 / NCTC 11704 / L1) (Acholeplasma florum), this protein is Ribosome maturation factor RimP.